The following is a 1193-amino-acid chain: DNA-directed RNA polymerase subunit beta (1193 aa).

Acidic residues predominate over residues 1152 to 1161 (IEMRDLEDDE). Positions 1152–1193 (IEMRDLEDDEETKKADGLALSNDEDAADLAPVDLERDAVTKE) are disordered. Basic and acidic residues predominate over residues 1184-1193 (DLERDAVTKE).

This sequence belongs to the RNA polymerase beta chain family. The RNAP catalytic core consists of 2 alpha, 1 beta, 1 beta' and 1 omega subunit. When a sigma factor is associated with the core the holoenzyme is formed, which can initiate transcription.

The catalysed reaction is RNA(n) + a ribonucleoside 5'-triphosphate = RNA(n+1) + diphosphate. DNA-dependent RNA polymerase catalyzes the transcription of DNA into RNA using the four ribonucleoside triphosphates as substrates. This is DNA-directed RNA polymerase subunit beta from Bacillus pumilus (strain SAFR-032).